The following is a 159-amino-acid chain: Large ribosomal subunit protein uL22 (159 aa).

The interval 129 to 159 is disordered; it reads VEGQQKAKMARQKAVTSVVKAPSKTQGGVQK.

The protein belongs to the universal ribosomal protein uL22 family. As to quaternary structure, part of the 50S ribosomal subunit.

Functionally, this protein binds specifically to 23S rRNA; its binding is stimulated by other ribosomal proteins, e.g. L4, L17, and L20. It is important during the early stages of 50S assembly. It makes multiple contacts with different domains of the 23S rRNA in the assembled 50S subunit and ribosome. The globular domain of the protein is located near the polypeptide exit tunnel on the outside of the subunit, while an extended beta-hairpin is found that lines the wall of the exit tunnel in the center of the 70S ribosome. This chain is Large ribosomal subunit protein uL22 (rplV), found in Mycoplasma pneumoniae (strain ATCC 29342 / M129 / Subtype 1) (Mycoplasmoides pneumoniae).